The sequence spans 210 residues: MLLCDIGNTYLHFYQEGKVWKELPRRLKAGMEVQEVYYISVNPPSARRLLEVYPHAIDLAPHMVLDTAYKGLGVDRMAACKGIEDGVVVDAGSAITVDVMQNQVHLGGFIMPGIASFSSMLKSISPALEKELNLSVELSALPQNTRDALSYGAIKAIVMMIQNSCKNKRLFFTGGDGKYLARFFENAIHDNSIVFKGMLKTLEEMKEGKR.

ATP is bound at residue 5-12 (DIGNTYLH). Residues Tyr69 and 73 to 76 (GVDR) each bind substrate. Asp75 acts as the Proton acceptor in catalysis. Asp90 is a binding site for K(+). ATP is bound at residue Ser93. Thr145 contributes to the substrate binding site.

This sequence belongs to the type III pantothenate kinase family. Homodimer. NH4(+) serves as cofactor. It depends on K(+) as a cofactor.

It localises to the cytoplasm. It carries out the reaction (R)-pantothenate + ATP = (R)-4'-phosphopantothenate + ADP + H(+). Its pathway is cofactor biosynthesis; coenzyme A biosynthesis; CoA from (R)-pantothenate: step 1/5. Functionally, catalyzes the phosphorylation of pantothenate (Pan), the first step in CoA biosynthesis. The chain is Type III pantothenate kinase from Wolinella succinogenes (strain ATCC 29543 / DSM 1740 / CCUG 13145 / JCM 31913 / LMG 7466 / NCTC 11488 / FDC 602W) (Vibrio succinogenes).